A 285-amino-acid chain; its full sequence is Nucleotide-binding protein Gmet_1286 (285 aa).

Position 8–15 (Gly8–Ser15) interacts with ATP. Asp59 to Gly62 lines the GTP pocket.

The protein belongs to the RapZ-like family.

In terms of biological role, displays ATPase and GTPase activities. The sequence is that of Nucleotide-binding protein Gmet_1286 from Geobacter metallireducens (strain ATCC 53774 / DSM 7210 / GS-15).